The following is a 309-amino-acid chain: DDRGK domain-containing protein 1 (309 aa).

Topologically, residues Met-1–Asp-2 are lumenal. A helical transmembrane segment spans residues Leu-3–Leu-23. Over Gln-24–Ser-309 the chain is Cytoplasmic. Residues Thr-30–Lys-178 form a disordered region. Over residues Arg-53–Asp-84 the composition is skewed to low complexity. Over residues Ala-85–Asp-95 the composition is skewed to acidic residues. Positions Leu-107–Lys-178 are enriched in basic and acidic residues.

The protein belongs to the DDRGK1 family. In terms of assembly, interacts with Atg9; the interaction is transient.

It is found in the endoplasmic reticulum membrane. In terms of biological role, substrate adapter for ufmylation, the covalent attachment of the ubiquitin-like modifier UFM1 to substrate proteins. Required for ufmylation of Atg9; protects the nervous system during aging, possibly by stabilizing Atg9 and supporting its function. In Drosophila persimilis (Fruit fly), this protein is DDRGK domain-containing protein 1.